Here is a 161-residue protein sequence, read N- to C-terminus: ATP synthase subunit b 1 (161 aa).

The chain crosses the membrane as a helical span at residues 1-21 (MFATAEFWILACLVAFFAILG).

This sequence belongs to the ATPase B chain family. As to quaternary structure, F-type ATPases have 2 components, F(1) - the catalytic core - and F(0) - the membrane proton channel. F(1) has five subunits: alpha(3), beta(3), gamma(1), delta(1), epsilon(1). F(0) has three main subunits: a(1), b(2) and c(10-14). The alpha and beta chains form an alternating ring which encloses part of the gamma chain. F(1) is attached to F(0) by a central stalk formed by the gamma and epsilon chains, while a peripheral stalk is formed by the delta and b chains.

It localises to the cell inner membrane. F(1)F(0) ATP synthase produces ATP from ADP in the presence of a proton or sodium gradient. F-type ATPases consist of two structural domains, F(1) containing the extramembraneous catalytic core and F(0) containing the membrane proton channel, linked together by a central stalk and a peripheral stalk. During catalysis, ATP synthesis in the catalytic domain of F(1) is coupled via a rotary mechanism of the central stalk subunits to proton translocation. Its function is as follows. Component of the F(0) channel, it forms part of the peripheral stalk, linking F(1) to F(0). This Parvibaculum lavamentivorans (strain DS-1 / DSM 13023 / NCIMB 13966) protein is ATP synthase subunit b 1.